Consider the following 189-residue polypeptide: dCTP deaminase (189 aa).

DCTP is bound by residues 112–117 (KSTYAR), 136–138 (TLE), glutamine 157, tyrosine 171, and glutamine 181. Glutamate 138 serves as the catalytic Proton donor/acceptor.

It belongs to the dCTP deaminase family. Homotrimer.

The catalysed reaction is dCTP + H2O + H(+) = dUTP + NH4(+). Its pathway is pyrimidine metabolism; dUMP biosynthesis; dUMP from dCTP (dUTP route): step 1/2. Functionally, catalyzes the deamination of dCTP to dUTP. The protein is dCTP deaminase of Albidiferax ferrireducens (strain ATCC BAA-621 / DSM 15236 / T118) (Rhodoferax ferrireducens).